The primary structure comprises 297 residues: Ribosomal RNA small subunit methyltransferase A (297 aa).

S-adenosyl-L-methionine contacts are provided by Asn31, Leu33, Gly58, Glu79, Asp104, and Asn129.

The protein belongs to the class I-like SAM-binding methyltransferase superfamily. rRNA adenine N(6)-methyltransferase family. RsmA subfamily.

The protein resides in the cytoplasm. The enzyme catalyses adenosine(1518)/adenosine(1519) in 16S rRNA + 4 S-adenosyl-L-methionine = N(6)-dimethyladenosine(1518)/N(6)-dimethyladenosine(1519) in 16S rRNA + 4 S-adenosyl-L-homocysteine + 4 H(+). Its function is as follows. Specifically dimethylates two adjacent adenosines (A1518 and A1519) in the loop of a conserved hairpin near the 3'-end of 16S rRNA in the 30S particle. May play a critical role in biogenesis of 30S subunits. The protein is Ribosomal RNA small subunit methyltransferase A of Pediococcus pentosaceus (strain ATCC 25745 / CCUG 21536 / LMG 10740 / 183-1w).